The following is a 289-amino-acid chain: Epoxyqueuosine reductase (289 aa).

The active-site Proton donor is the Asp-111. The 4Fe-4S ferredoxin-type domain maps to 156-185 (QGDRPHSQHCGTCTRCLEACPTQAIVEPFV). Residues Cys-165, Cys-168, Cys-171, Cys-175, Cys-191, Cys-219, Cys-222, and Cys-226 each coordinate [4Fe-4S] cluster.

Belongs to the QueG family. Monomer. Cob(II)alamin is required as a cofactor. It depends on [4Fe-4S] cluster as a cofactor.

It is found in the cytoplasm. It carries out the reaction epoxyqueuosine(34) in tRNA + AH2 = queuosine(34) in tRNA + A + H2O. Its pathway is tRNA modification; tRNA-queuosine biosynthesis. Its function is as follows. Catalyzes the conversion of epoxyqueuosine (oQ) to queuosine (Q), which is a hypermodified base found in the wobble positions of tRNA(Asp), tRNA(Asn), tRNA(His) and tRNA(Tyr). In Synechocystis sp. (strain ATCC 27184 / PCC 6803 / Kazusa), this protein is Epoxyqueuosine reductase.